The chain runs to 161 residues: Glycine-rich RNA-binding protein blt801 (161 aa).

The RRM domain maps to 6-84 (YRCFVGGLRW…RNITVNEAQS (79 aa)). The interval 72-161 (LDGRNITVNE…GGSGGGNWRE (90 aa)) is disordered. Residue Ser87 is modified to Phosphoserine; by PKA. A compositionally biased stretch (gly residues) spans 89–161 (GGGGFGGGGG…GGSGGGNWRE (73 aa)).

Functionally, binds single-stranded DNA and homoribopolymers of guanine, uracil and adenine, but not cytosine. Also binds RNA, with a preference for RNA containing a high proportion of adenine within an open loop structure. Possibly has a role in RNA transcription or processing during stress. This is Glycine-rich RNA-binding protein blt801 from Hordeum vulgare (Barley).